The primary structure comprises 235 residues: uncharacterized protein (235 aa).

This is an uncharacterized protein from Shigella flexneri.